Here is a 387-residue protein sequence, read N- to C-terminus: 3-ketoacyl-CoA thiolase (387 aa).

Cys-91 acts as the Acyl-thioester intermediate in catalysis. Catalysis depends on proton acceptor residues His-343 and Cys-373.

This sequence belongs to the thiolase-like superfamily. Thiolase family. Heterotetramer of two alpha chains (FadB) and two beta chains (FadA).

It is found in the cytoplasm. It catalyses the reaction an acyl-CoA + acetyl-CoA = a 3-oxoacyl-CoA + CoA. It participates in lipid metabolism; fatty acid beta-oxidation. Its function is as follows. Catalyzes the final step of fatty acid oxidation in which acetyl-CoA is released and the CoA ester of a fatty acid two carbons shorter is formed. This chain is 3-ketoacyl-CoA thiolase, found in Escherichia fergusonii (strain ATCC 35469 / DSM 13698 / CCUG 18766 / IAM 14443 / JCM 21226 / LMG 7866 / NBRC 102419 / NCTC 12128 / CDC 0568-73).